The sequence spans 330 residues: Small ribosomal subunit protein mS35 (330 aa).

Positions 50–73 are disordered; it reads AAGKGVRGQMKPRRQAGEPRTERM. Basic and acidic residues predominate over residues 64 to 73; it reads QAGEPRTERM.

It belongs to the mitochondrion-specific ribosomal protein mS35 family. As to quaternary structure, component of the mitochondrial ribosome small subunit (28S) which comprises a 12S rRNA and about 30 distinct proteins.

It localises to the mitochondrion. This Danio rerio (Zebrafish) protein is Small ribosomal subunit protein mS35 (mrps35).